The primary structure comprises 59 residues: Dimethylamine corrinoid protein (59 aa).

Positions 1–59 (TLQGQKDVIELLKEEGLRDKIKVMVGGAPATQAWADKIGADCYAENASEAVAKAKELLA) constitute a B12-binding domain.

It belongs to the methylamine corrinoid protein family.

It participates in one-carbon metabolism; methanogenesis from dimethylamine. Its function is as follows. Acts as a methyl group carrier between MtbB and MtbA. In Methanosarcina thermophila, this protein is Dimethylamine corrinoid protein (mtbC).